We begin with the raw amino-acid sequence, 334 residues long: Fructose-1,6-bisphosphatase class 1 (334 aa).

Glu89, Asp112, Leu114, and Asp115 together coordinate Mg(2+). Residues 115-118 (DGSS), Asn208, Tyr241, and Lys271 each bind substrate. Residue Glu277 participates in Mg(2+) binding.

It belongs to the FBPase class 1 family. As to quaternary structure, homotetramer. Mg(2+) serves as cofactor.

Its subcellular location is the cytoplasm. It catalyses the reaction beta-D-fructose 1,6-bisphosphate + H2O = beta-D-fructose 6-phosphate + phosphate. It participates in carbohydrate biosynthesis; gluconeogenesis. In Photorhabdus laumondii subsp. laumondii (strain DSM 15139 / CIP 105565 / TT01) (Photorhabdus luminescens subsp. laumondii), this protein is Fructose-1,6-bisphosphatase class 1.